Here is a 480-residue protein sequence, read N- to C-terminus: ATP synthase subunit beta (480 aa).

ATP is bound at residue G158–T165.

This sequence belongs to the ATPase alpha/beta chains family. In terms of assembly, F-type ATPases have 2 components, CF(1) - the catalytic core - and CF(0) - the membrane proton channel. CF(1) has five subunits: alpha(3), beta(3), gamma(1), delta(1), epsilon(1). CF(0) has three main subunits: a(1), b(2) and c(9-12). The alpha and beta chains form an alternating ring which encloses part of the gamma chain. CF(1) is attached to CF(0) by a central stalk formed by the gamma and epsilon chains, while a peripheral stalk is formed by the delta and b chains.

The protein localises to the cell inner membrane. The enzyme catalyses ATP + H2O + 4 H(+)(in) = ADP + phosphate + 5 H(+)(out). Its function is as follows. Produces ATP from ADP in the presence of a proton gradient across the membrane. The catalytic sites are hosted primarily by the beta subunits. This is ATP synthase subunit beta from Acidobacterium capsulatum (strain ATCC 51196 / DSM 11244 / BCRC 80197 / JCM 7670 / NBRC 15755 / NCIMB 13165 / 161).